The primary structure comprises 82 residues: Large ribosomal subunit protein bL31B (82 aa).

It belongs to the bacterial ribosomal protein bL31 family. Type B subfamily. Part of the 50S ribosomal subunit.

The chain is Large ribosomal subunit protein bL31B from Bacillus velezensis (strain DSM 23117 / BGSC 10A6 / LMG 26770 / FZB42) (Bacillus amyloliquefaciens subsp. plantarum).